Reading from the N-terminus, the 266-residue chain is GTP cyclohydrolase FolE2 1 (266 aa).

Belongs to the GTP cyclohydrolase IV family.

The enzyme catalyses GTP + H2O = 7,8-dihydroneopterin 3'-triphosphate + formate + H(+). It functions in the pathway cofactor biosynthesis; 7,8-dihydroneopterin triphosphate biosynthesis; 7,8-dihydroneopterin triphosphate from GTP: step 1/1. Converts GTP to 7,8-dihydroneopterin triphosphate. The protein is GTP cyclohydrolase FolE2 1 of Dechloromonas aromatica (strain RCB).